A 233-amino-acid chain; its full sequence is UPF0173 metal-dependent hydrolase Acid345_3437 (233 aa).

The protein belongs to the UPF0173 family.

This chain is UPF0173 metal-dependent hydrolase Acid345_3437, found in Koribacter versatilis (strain Ellin345).